Reading from the N-terminus, the 191-residue chain is Putative zinc metalloprotease MJ0611 (191 aa).

The helical transmembrane segment at 20–40 threads the bilayer; the sequence is AIAFIFSYPNFSILVFIISLI. A Zn(2+)-binding site is contributed by His-49. Glu-50 is an active-site residue. Residue His-53 coordinates Zn(2+). 4 consecutive transmembrane segments (helical) span residues 73–93, 110–130, 133–153, and 171–191; these read LILG…PGAV, LAGP…MLIF, GSLL…LAGF, and PFIW…MMFW.

It belongs to the peptidase M50B family. Requires Zn(2+) as cofactor.

Its subcellular location is the cell membrane. This chain is Putative zinc metalloprotease MJ0611, found in Methanocaldococcus jannaschii (strain ATCC 43067 / DSM 2661 / JAL-1 / JCM 10045 / NBRC 100440) (Methanococcus jannaschii).